The sequence spans 103 residues: Histone H4.1 (103 aa).

Residues 1–14 are compositionally biased toward gly residues; that stretch reads MSGRGKGGKGLGKG. Positions 1–20 are disordered; it reads MSGRGKGGKGLGKGGAKRHR. An N6-acetyl-N6-methyllysine; alternate modification is found at K6. K6, K9, and K13 each carry N6-methyllysine; alternate. K13 carries the post-translational modification N6-acetyl-N6-methyllysine; alternate. A DNA-binding region spans residues 17–21; the sequence is KRHRK. K92 carries the N6-glutaryllysine modification.

Belongs to the histone H4 family. As to quaternary structure, the nucleosome is a histone octamer containing two molecules each of H2A, H2B, H3 and H4 assembled in one H3-H4 heterotetramer and two H2A-H2B heterodimers. The octamer wraps approximately 147 bp of DNA. Post-translationally, glutarylation at Lys-92 (H4K91glu) destabilizes nucleosomes by promoting dissociation of the H2A-H2B dimers from nucleosomes.

Its subcellular location is the nucleus. The protein localises to the chromosome. Its function is as follows. Core component of nucleosome. Nucleosomes wrap and compact DNA into chromatin, limiting DNA accessibility to the cellular machineries which require DNA as a template. Histones thereby play a central role in transcription regulation, DNA repair, DNA replication and chromosomal stability. DNA accessibility is regulated via a complex set of post-translational modifications of histones, also called histone code, and nucleosome remodeling. The sequence is that of Histone H4.1 (HHF1) from Eremothecium gossypii (strain ATCC 10895 / CBS 109.51 / FGSC 9923 / NRRL Y-1056) (Yeast).